The primary structure comprises 284 residues: Tropomyosin (284 aa).

A coiled-coil region spans residues 1-284; it reads MDAIKKKMLM…DQALNELHNM (284 aa). Disordered regions lie at residues 106–134 and 186–221; these read LNSTVEKLTDSEKAADESERARKVLENRQ and AETKARELEDELKTTTGQLKSMEAQATKASEKEEAY. 2 stretches are compositionally biased toward basic and acidic residues: residues 112-134 and 186-198; these read KLTDSEKAADESERARKVLENRQ and AETKARELEDELK.

It belongs to the tropomyosin family. As to quaternary structure, homodimer.

In terms of biological role, tropomyosin, in association with the troponin complex, plays a central role in the calcium dependent regulation of muscle contraction. This is Tropomyosin (TPM) from Branchiostoma belcheri (Amphioxus).